The following is a 156-amino-acid chain: MEKIPMTPSGFAALEAELKQLKSVERPAIIKAIAEAREHGDLSENAEYHSAREKQSFIEGRIKELEGVLSLADVIDPTKLSGAIKFGARVTLVDEDTDEEKTWQIVGEHEANIEKGLLNIKSPIARALIGKDEGDSVEVKTPGGQKSYEILSIEYS.

Positions 46–66 (AEYHSAREKQSFIEGRIKELE) form a coiled coil.

This sequence belongs to the GreA/GreB family.

In terms of biological role, necessary for efficient RNA polymerase transcription elongation past template-encoded arresting sites. The arresting sites in DNA have the property of trapping a certain fraction of elongating RNA polymerases that pass through, resulting in locked ternary complexes. Cleavage of the nascent transcript by cleavage factors such as GreA or GreB allows the resumption of elongation from the new 3'terminus. GreA releases sequences of 2 to 3 nucleotides. In Ruegeria pomeroyi (strain ATCC 700808 / DSM 15171 / DSS-3) (Silicibacter pomeroyi), this protein is Transcription elongation factor GreA.